A 67-amino-acid chain; its full sequence is MKKDLHPEYHEATVTCASCGNTFKVGSTKENINVEVCSQCHPFYTGRQRFVEHGGRVEKFKKKYNMD.

Belongs to the bacterial ribosomal protein bL31 family. Type A subfamily. Part of the 50S ribosomal subunit.

In terms of biological role, binds the 23S rRNA. This Finegoldia magna (strain ATCC 29328 / DSM 20472 / WAL 2508) (Peptostreptococcus magnus) protein is Large ribosomal subunit protein bL31.